Here is a 623-residue protein sequence, read N- to C-terminus: Glutathione import ATP-binding protein GsiA (623 aa).

ABC transporter domains follow at residues 15 to 269 and 314 to 564; these read VENL…RALL and LRVR…RKLL. Residues 49–56 and 357–364 each bind ATP; these read GESGSGKS.

Belongs to the ABC transporter superfamily. Glutathione importer (TC 3.A.1.5.11) family. The complex is composed of two ATP-binding proteins (GsiA), two transmembrane proteins (GsiC and GsiD) and a solute-binding protein (GsiB).

Its subcellular location is the cell inner membrane. The catalysed reaction is glutathione(out) + ATP + H2O = glutathione(in) + ADP + phosphate + H(+). Part of the ABC transporter complex GsiABCD involved in glutathione import. Responsible for energy coupling to the transport system. The chain is Glutathione import ATP-binding protein GsiA from Shigella flexneri serotype 5b (strain 8401).